The primary structure comprises 514 residues: MEISWGRAMWRNFLGQSPDWYKLALLVFLIVNPFIFLANPFIAGWLLVAEFIFTLAMALKCYPLLPGGLLAIEAVIIGMTSAAHVREEVAANLEVLLLLMFMVAGIYFMKQLLLFIFTRLLLSIRSKMVLSLAFCVAAAFLSAFLDALTVVAVVISVAVGFYGIYHRVASSRGEENDMLDDSHIDPHYKTVLEQFRGFLRSLMMHAGVGTALGGVMTMVGEPQNLIIAKAAGWHFGDFFLRMSPVTVPVLVCGLLTCMLVEKMRWFGYGETLPEKVRDVLQQFDDQSRKKRTRQDKIKLIVQAIIGVWLVTALALHLAEVGLIGLSVIILATALTGVTDEHAIGKAFTESLPFTALLTVFFSIVAVIIDQHLFAPIIQFVLQASEHAQLTLFYLFNGLLSSISDNVFVGTIYINEAKAAMENGAISLKQFELLAVAINTGTNLPSVATPNGQAAFLFLLTSALAPLIRLSYGRMVWMALPYTIVLTLIGLLCVEFTLAPATEWMTQAGWLATLS.

Helical transmembrane passes span 23–43, 63–83, 97–117, 120–140, 144–164, 202–222, 238–258, 303–323, 357–377, 391–411, 447–467, and 475–495; these read LALL…PFIA, PLLP…TSAA, LLLM…LFIF, LLLS…AAAF, FLDA…FYGI, LMMH…VGEP, FFLR…LTCM, AIIG…VGLI, LTVF…APII, LFYL…VGTI, ATPN…APLI, and VWMA…CVEF.

Belongs to the NhaB Na(+)/H(+) (TC 2.A.34) antiporter family.

The protein localises to the cell inner membrane. It catalyses the reaction 2 Na(+)(in) + 3 H(+)(out) = 2 Na(+)(out) + 3 H(+)(in). Na(+)/H(+) antiporter that extrudes sodium in exchange for external protons. This is Na(+)/H(+) antiporter NhaB from Salmonella heidelberg (strain SL476).